The sequence spans 248 residues: Phosphate import ATP-binding protein PstB (248 aa).

Positions 1 to 243 (MAVNDVNVFY…PQHNLTQGYI (243 aa)) constitute an ABC transporter domain. 33 to 40 (GPSGCGKS) serves as a coordination point for ATP.

Belongs to the ABC transporter superfamily. Phosphate importer (TC 3.A.1.7) family. As to quaternary structure, the complex is composed of two ATP-binding proteins (PstB), two transmembrane proteins (PstC and PstA) and a solute-binding protein (PstS).

It localises to the cell inner membrane. It carries out the reaction phosphate(out) + ATP + H2O = ADP + 2 phosphate(in) + H(+). Functionally, part of the ABC transporter complex PstSACB involved in phosphate import. Responsible for energy coupling to the transport system. The protein is Phosphate import ATP-binding protein PstB of Rhodospirillum rubrum (strain ATCC 11170 / ATH 1.1.1 / DSM 467 / LMG 4362 / NCIMB 8255 / S1).